The sequence spans 314 residues: DNA-directed RNA polymerase subunit alpha (314 aa).

Positions 1-227 (MTTFEIECIE…ELLFPLKEIN (227 aa)) are alpha N-terminal domain (alpha-NTD). The tract at residues 237–314 (IEDSKINQIL…LPKEKTSKSN (78 aa)) is alpha C-terminal domain (alpha-CTD).

It belongs to the RNA polymerase alpha chain family. In plastids the minimal PEP RNA polymerase catalytic core is composed of four subunits: alpha, beta, beta', and beta''. When a (nuclear-encoded) sigma factor is associated with the core the holoenzyme is formed, which can initiate transcription.

Its subcellular location is the plastid. The protein resides in the chloroplast. The catalysed reaction is RNA(n) + a ribonucleoside 5'-triphosphate = RNA(n+1) + diphosphate. DNA-dependent RNA polymerase catalyzes the transcription of DNA into RNA using the four ribonucleoside triphosphates as substrates. This chain is DNA-directed RNA polymerase subunit alpha, found in Pyrenomonas salina.